The primary structure comprises 754 residues: 5-methyltetrahydropteroyltriglutamate--homocysteine methyltransferase (754 aa).

5-methyltetrahydropteroyltri-L-glutamate-binding positions include 16–19 (RELK) and lysine 114. L-homocysteine contacts are provided by residues 430–432 (IGS) and glutamate 483. L-methionine is bound by residues 430–432 (IGS) and glutamate 483. 5-methyltetrahydropteroyltri-L-glutamate is bound by residues 514–515 (RC) and tryptophan 560. Residue aspartate 598 coordinates L-homocysteine. Aspartate 598 lines the L-methionine pocket. Residue glutamate 604 coordinates 5-methyltetrahydropteroyltri-L-glutamate. Positions 640, 642, and 664 each coordinate Zn(2+). The active-site Proton donor is the histidine 693. Cysteine 725 contributes to the Zn(2+) binding site.

This sequence belongs to the vitamin-B12 independent methionine synthase family. Zn(2+) serves as cofactor.

The enzyme catalyses 5-methyltetrahydropteroyltri-L-glutamate + L-homocysteine = tetrahydropteroyltri-L-glutamate + L-methionine. The protein operates within amino-acid biosynthesis; L-methionine biosynthesis via de novo pathway; L-methionine from L-homocysteine (MetE route): step 1/1. Functionally, catalyzes the transfer of a methyl group from 5-methyltetrahydrofolate to homocysteine resulting in methionine formation. The sequence is that of 5-methyltetrahydropteroyltriglutamate--homocysteine methyltransferase from Aeromonas salmonicida (strain A449).